A 159-amino-acid chain; its full sequence is Transcriptional repressor NrdR (159 aa).

A zinc finger spans residues 3 to 34; it reads CPTCQNTDSRVLESRSADTGKSVRRRRECLNC. Residues 49–139 enclose the ATP-cone domain; sequence ISVLKKDGSR…VYRKFNGVKD (91 aa).

It belongs to the NrdR family. Zn(2+) serves as cofactor.

Its function is as follows. Negatively regulates transcription of bacterial ribonucleotide reductase nrd genes and operons by binding to NrdR-boxes. The chain is Transcriptional repressor NrdR from Prochlorococcus marinus (strain MIT 9515).